A 382-amino-acid polypeptide reads, in one-letter code: Protein RecA (382 aa).

The interval 1–20 (MPADVKAAQSSAGDSRPGER) is disordered. 79–86 (GPESSGKT) is an ATP binding site. Over residues 360-369 (SAAAKPSAKT) the composition is skewed to low complexity. The interval 360-382 (SAAAKPSAKTADTDKKLVADGAA) is disordered. A compositionally biased stretch (basic and acidic residues) spans 370–382 (ADTDKKLVADGAA).

This sequence belongs to the RecA family.

The protein resides in the cytoplasm. Can catalyze the hydrolysis of ATP in the presence of single-stranded DNA, the ATP-dependent uptake of single-stranded DNA by duplex DNA, and the ATP-dependent hybridization of homologous single-stranded DNAs. It interacts with LexA causing its activation and leading to its autocatalytic cleavage. The chain is Protein RecA from Synechococcus sp. (strain CC9311).